The primary structure comprises 81 residues: Albumin-1 (81 aa).

The propeptide occupies 27 to 34 (LSSVAKMI).

Three disulfide bonds are probably present. In terms of processing, the C-terminal glycine may be removed from A1b.

Functionally, A1b binds to basic 7S globulin (BG) and stimulates its phosphorylation activity. This chain is Albumin-1 (LEG1), found in Lupinus angustifolius (Narrow-leaved blue lupine).